Here is an 83-residue protein sequence, read N- to C-terminus: Protein ShK-like4 (83 aa).

The signal sequence occupies residues 1 to 21 (MDTRVIAVLFVAIMVLSSTNA). Residues 22–48 (LPKQKGSYKNMNHADFLKGLDRASSKR) constitute a propeptide that is removed on maturation. Cystine bridges form between Cys50-Cys82, Cys57-Cys75, and Cys67-Cys79. The ShKT domain occupies 50-83 (CRDSHWSCFFQSNYEDICSTAQAEECALSCGLCE).

Contains 3 disulfide bonds. As to expression, expressed in various neurons (ectodermal sensory cells) (in planulae and primary polyps). Not expressed in nematocytes.

In terms of biological role, probable neuropeptide. The sequence is that of Protein ShK-like4 from Nematostella vectensis (Starlet sea anemone).